A 317-amino-acid polypeptide reads, in one-letter code: Tetraspanin-15 (317 aa).

The interval Met-1–Asn-43 is disordered. The Cytoplasmic portion of the chain corresponds to Met-1 to Gly-60. The segment covering Val-7 to Glu-28 has biased composition (low complexity). A helical membrane pass occupies residues Val-61–Leu-81. Topologically, residues Tyr-82–Arg-96 are extracellular. Residues Val-97–Phe-117 form a helical membrane-spanning segment. At Leu-118–Ala-126 the chain is on the cytoplasmic side. A helical membrane pass occupies residues Leu-127–Val-147. Topologically, residues Asn-148–Gln-287 are extracellular. A glycan (N-linked (GlcNAc...) asparagine) is linked at Asn-224. Residues Leu-288 to Leu-308 traverse the membrane as a helical segment. Topologically, residues Ala-309–Gly-317 are cytoplasmic.

This sequence belongs to the tetraspanin (TM4SF) family.

It localises to the membrane. Functionally, may be involved in the regulation of cell differentiation. This chain is Tetraspanin-15 (TET15), found in Arabidopsis thaliana (Mouse-ear cress).